Consider the following 449-residue polypeptide: Gallate transporter (449 aa).

Transmembrane regions (helical) follow at residues 26–46 (WLIL…VAVM), 62–82 (AAFG…ALTA), 92–112 (KKVL…CAFA), 123–143 (LLTG…LAEY), 155–175 (IMFT…AWLI), 183–203 (VLLA…WLLP), 262–282 (LALW…MGWL), 298–318 (TITG…GWIM), 326–346 (VIAI…ALSL), 349–369 (SLLV…QTAL), 388–408 (WMLG…GAVL), and 414–434 (LPLL…AILA).

Belongs to the major facilitator superfamily. Sugar transporter (TC 2.A.1.1) family.

Its subcellular location is the membrane. Its function is as follows. Transporter that specifically mediates the uptake of gallate. In Pseudomonas putida (Arthrobacter siderocapsulatus), this protein is Gallate transporter (galT).